The sequence spans 229 residues: Heptaprenylglyceryl phosphate synthase (229 aa).

Lysine 12 provides a ligand contact to sn-glycerol 1-phosphate. The Mg(2+) site is built by aspartate 14 and serine 40. Sn-glycerol 1-phosphate contacts are provided by residues 159 to 164 (YLEYSG), glycine 189, and 209 to 210 (GN).

This sequence belongs to the GGGP/HepGP synthase family. Group I subfamily. Homodimer. Mg(2+) serves as cofactor.

It carries out the reaction sn-glycerol 1-phosphate + all-trans-heptaprenyl diphosphate = 3-heptaprenyl-sn-glycero-1-phosphate + diphosphate. It participates in membrane lipid metabolism; glycerophospholipid metabolism. Prenyltransferase that catalyzes in vivo the transfer of the heptaprenyl moiety of heptaprenyl pyrophosphate (HepPP; 35 carbon atoms) to the C3 hydroxyl of sn-glycerol-1-phosphate (G1P), producing heptaprenylglyceryl phosphate (HepGP). This reaction is an ether-bond-formation step in the biosynthesis of archaea-type G1P-based membrane lipids found in Bacillales. This Bacillus mycoides (strain KBAB4) (Bacillus weihenstephanensis) protein is Heptaprenylglyceryl phosphate synthase.